The sequence spans 73 residues: Large ribosomal subunit protein bL31 (73 aa).

It belongs to the bacterial ribosomal protein bL31 family. Type A subfamily. As to quaternary structure, part of the 50S ribosomal subunit.

In terms of biological role, binds the 23S rRNA. This chain is Large ribosomal subunit protein bL31, found in Rhodospirillum centenum (strain ATCC 51521 / SW).